The following is a 201-amino-acid chain: ATP-dependent Clp protease proteolytic subunit (201 aa).

The active-site Nucleophile is the S101. The active site involves H126.

It belongs to the peptidase S14 family. Fourteen ClpP subunits assemble into 2 heptameric rings which stack back to back to give a disk-like structure with a central cavity, resembling the structure of eukaryotic proteasomes.

It localises to the cytoplasm. It carries out the reaction Hydrolysis of proteins to small peptides in the presence of ATP and magnesium. alpha-casein is the usual test substrate. In the absence of ATP, only oligopeptides shorter than five residues are hydrolyzed (such as succinyl-Leu-Tyr-|-NHMec, and Leu-Tyr-Leu-|-Tyr-Trp, in which cleavage of the -Tyr-|-Leu- and -Tyr-|-Trp bonds also occurs).. In terms of biological role, cleaves peptides in various proteins in a process that requires ATP hydrolysis. Has a chymotrypsin-like activity. Plays a major role in the degradation of misfolded proteins. The protein is ATP-dependent Clp protease proteolytic subunit of Francisella tularensis subsp. tularensis (strain FSC 198).